Consider the following 185-residue polypeptide: Peptidyl-tRNA hydrolase (185 aa).

Tyr14 is a tRNA binding site. His19 acts as the Proton acceptor in catalysis. TRNA contacts are provided by Phe64, Asn66, and Asn112.

Belongs to the PTH family. Monomer.

The protein resides in the cytoplasm. It catalyses the reaction an N-acyl-L-alpha-aminoacyl-tRNA + H2O = an N-acyl-L-amino acid + a tRNA + H(+). Hydrolyzes ribosome-free peptidyl-tRNAs (with 1 or more amino acids incorporated), which drop off the ribosome during protein synthesis, or as a result of ribosome stalling. In terms of biological role, catalyzes the release of premature peptidyl moieties from peptidyl-tRNA molecules trapped in stalled 50S ribosomal subunits, and thus maintains levels of free tRNAs and 50S ribosomes. In Alkaliphilus metalliredigens (strain QYMF), this protein is Peptidyl-tRNA hydrolase.